A 647-amino-acid chain; its full sequence is MADVYPVDPAFAADARVTREQYAALYRESIQHPEQFWGKAAQRLEWFKQPTQIKDVSYALDDFHIRWFGDGELNASVNCLDRQLATRGDKTALLFEPDSPDAASYPVTYRELYERVCKLGNALRNLGVKKGDRVTIYLPMIVDAAVAMLACARIGAVHSVVFGGFAANSIADRVIDCQSKLIITADEGLRGGKKIPLKANVDAALKIPGTNTVETVLVVRHTGGAVEMQAPRDRWFHDVVDGQPAACEPERMNAEDPLFILYTSGSTGKPKGVLHTTAGYLLFASYTHEVVFDLREDDIYWCTADVGWVTGHSYIVYGPLANGATAVMFEGVPNYPNVSRFWEVIDKHQVTIFYTAPTAIRALMRDGADPVKKTSRKSLRLLGSVGEPINPEAWRWYYEVVGDSRCPIVDTWWQTETGGILISPLAGAVDLKPGSATLPFFGVQPALVDAEGKILEGATEGNLVLLDSWPGQMRSVYGDHQRFIDTYFRTYPGSYFTGDGCRRDADGYYWITGRVDDVINVSGHRIGTAEVESALVSHPKVAEAAVVGFPHDVKGQGIYAYVTLIAGQTPSEDLHKELVSWVRKEIGPIASPDHLQWAPGLPKTRSGKIMRRILRKIAENAPDQLGDTSTLADPSVVDSLVNERLAR.

CoA contacts are provided by residues 190–193 (RGGK), Thr310, and Asn334. ATP-binding positions include 386–388 (GEP), 410–415 (DTWWQT), Asp499, and Arg514. Ser522 is a binding site for CoA. Arg525 lines the ATP pocket. Mg(2+) is bound by residues Val536, His538, and Val541. Arg583 contacts CoA. Lys608 is subject to N6-acetyllysine.

Belongs to the ATP-dependent AMP-binding enzyme family. It depends on Mg(2+) as a cofactor. Post-translationally, acetylated. Deacetylation by the SIR2-homolog deacetylase activates the enzyme.

The catalysed reaction is acetate + ATP + CoA = acetyl-CoA + AMP + diphosphate. Its function is as follows. Catalyzes the conversion of acetate into acetyl-CoA (AcCoA), an essential intermediate at the junction of anabolic and catabolic pathways. AcsA undergoes a two-step reaction. In the first half reaction, AcsA combines acetate with ATP to form acetyl-adenylate (AcAMP) intermediate. In the second half reaction, it can then transfer the acetyl group from AcAMP to the sulfhydryl group of CoA, forming the product AcCoA. The chain is Acetyl-coenzyme A synthetase from Xanthomonas axonopodis pv. citri (strain 306).